A 2290-amino-acid polypeptide reads, in one-letter code: Protein Ycf2 (2290 aa).

An ATP-binding site is contributed by 1644–1651; the sequence is GSIGTGRS.

Belongs to the Ycf2 family.

The protein resides in the plastid. The protein localises to the chloroplast stroma. Functionally, probable ATPase of unknown function. Its presence in a non-photosynthetic plant (Epifagus virginiana) and experiments in tobacco indicate that it has an essential function which is probably not related to photosynthesis. The sequence is that of Protein Ycf2 from Barbarea verna (Land cress).